Here is a 385-residue protein sequence, read N- to C-terminus: Probable nitrate transporter NarT (385 aa).

12 helical membrane-spanning segments follow: residues 14-34, 47-67, 69-89, 97-117, 139-159, 161-181, 205-225, 246-266, 277-297, 302-322, 330-350, and 359-379; these read TLSL…MPYI, IILA…GYLT, IIGA…PIFF, GMLM…SVGV, GNIG…IIGW, TTVR…FIFG, LYYL…FGLF, GVFI…GDKF, IIMI…LFTI, ISIC…SYFA, GIVS…ITYV, and LAFI…GHLY.

It belongs to the major facilitator superfamily. Nitrate/nitrite porter (TC 2.A.1.8) family.

It is found in the cell membrane. Its function is as follows. Probably required for nitrate uptake under anoxic conditions. Also possibly involved in excretion of nitrite produced by the dissimilatory reduction of nitrate. This chain is Probable nitrate transporter NarT (narT), found in Staphylococcus haemolyticus (strain JCSC1435).